The following is a 234-amino-acid chain: ATP-dependent dethiobiotin synthetase BioD (234 aa).

12 to 17 contributes to the ATP binding site; it reads DVGKTI. T16 serves as a coordination point for Mg(2+). The active site involves K37. T41 lines the substrate pocket. ATP contacts are provided by residues D54 and 115-118; that span reads EGAG. Mg(2+) contacts are provided by D54 and E115.

The protein belongs to the dethiobiotin synthetase family. In terms of assembly, homodimer. The cofactor is Mg(2+).

It is found in the cytoplasm. It carries out the reaction (7R,8S)-7,8-diammoniononanoate + CO2 + ATP = (4R,5S)-dethiobiotin + ADP + phosphate + 3 H(+). It functions in the pathway cofactor biosynthesis; biotin biosynthesis; biotin from 7,8-diaminononanoate: step 1/2. Its function is as follows. Catalyzes a mechanistically unusual reaction, the ATP-dependent insertion of CO2 between the N7 and N8 nitrogen atoms of 7,8-diaminopelargonic acid (DAPA, also called 7,8-diammoniononanoate) to form a ureido ring. This is ATP-dependent dethiobiotin synthetase BioD from Lysinibacillus sphaericus (strain C3-41).